The sequence spans 645 residues: UPF0313 protein CLB_0243 (645 aa).

Residues 295–566 form the Radical SAM core domain; sequence AIKEVKFSIT…RMQRALLQFS (272 aa). Cys309, Cys313, and Cys316 together coordinate [4Fe-4S] cluster. The segment at 598-645 is disordered; it reads NKPYKKSHKKNNAKNNNNHYNKNNNYNKNKDISKKNKKNSLSKHKKRK. Basic residues predominate over residues 600–609; sequence PYKKSHKKNN. Over residues 610–624 the composition is skewed to low complexity; the sequence is AKNNNNHYNKNNNYN. Positions 632-645 are enriched in basic residues; sequence KNKKNSLSKHKKRK.

It belongs to the UPF0313 family. The cofactor is [4Fe-4S] cluster.

The protein is UPF0313 protein CLB_0243 of Clostridium botulinum (strain ATCC 19397 / Type A).